The chain runs to 146 residues: Deoxyuridine 5'-triphosphate nucleotidohydrolase (146 aa).

Residues 66-68 (RSG), N79, 83-85 (TID), and K93 each bind substrate.

This sequence belongs to the dUTPase family. It depends on Mg(2+) as a cofactor.

It catalyses the reaction dUTP + H2O = dUMP + diphosphate + H(+). Its pathway is pyrimidine metabolism; dUMP biosynthesis; dUMP from dCTP (dUTP route): step 2/2. Functionally, this enzyme is involved in nucleotide metabolism: it produces dUMP, the immediate precursor of thymidine nucleotides and it decreases the intracellular concentration of dUTP so that uracil cannot be incorporated into DNA. In Zymomonas mobilis subsp. mobilis (strain ATCC 31821 / ZM4 / CP4), this protein is Deoxyuridine 5'-triphosphate nucleotidohydrolase.